The chain runs to 313 residues: Small ribosomal subunit biogenesis GTPase RsgA (313 aa).

The CP-type G domain occupies 82–235 (REKLIAANAT…IIDSPGIQQF (154 aa)). Residues 127-130 (NKTD) and 177-185 (GQSGMGKST) contribute to the GTP site. Residues Cys259, Cys264, His266, and Cys272 each coordinate Zn(2+).

This sequence belongs to the TRAFAC class YlqF/YawG GTPase family. RsgA subfamily. Monomer. Associates with 30S ribosomal subunit, binds 16S rRNA. The cofactor is Zn(2+).

It localises to the cytoplasm. Its function is as follows. One of several proteins that assist in the late maturation steps of the functional core of the 30S ribosomal subunit. Helps release RbfA from mature subunits. May play a role in the assembly of ribosomal proteins into the subunit. Circularly permuted GTPase that catalyzes slow GTP hydrolysis, GTPase activity is stimulated by the 30S ribosomal subunit. This Nitrosospira multiformis (strain ATCC 25196 / NCIMB 11849 / C 71) protein is Small ribosomal subunit biogenesis GTPase RsgA.